Consider the following 477-residue polypeptide: Cytochrome c-552 (477 aa).

The signal sequence occupies residues 1 to 26 (MVRISTSISYLWGMVASLFLMMPAYS). Residue H94 coordinates heme c. Residues C122, C125, and K126 each contribute to the heme site. 6 residues coordinate heme c: C160, C163, H164, C209, C212, and H213. Ca(2+)-binding residues include E215, Y216, K261, and Q263. Y216 provides a ligand contact to substrate. H264 contributes to the substrate binding site. Heme c is bound by residues H275, C282, C285, H286, H301, C314, C317, H318, and H393.

Belongs to the cytochrome c-552 family. Requires Ca(2+) as cofactor. It depends on heme c as a cofactor.

It is found in the periplasm. The catalysed reaction is 6 Fe(III)-[cytochrome c] + NH4(+) + 2 H2O = 6 Fe(II)-[cytochrome c] + nitrite + 8 H(+). Its pathway is nitrogen metabolism; nitrate reduction (assimilation). Functionally, catalyzes the reduction of nitrite to ammonia, consuming six electrons in the process. This chain is Cytochrome c-552, found in Pectobacterium carotovorum subsp. carotovorum (strain PC1).